A 197-amino-acid chain; its full sequence is MVERKASVERNTLETQVKCSINLDGSGKARFDIGVPFLEHMLDQIARHGLIDLDIECKGDLHIDDHHTVEDVGITLGQAFAQAIGDKKGIYRYGHAYVPLDEALSRVVIDFSGRPGLQMHVPYTRASVGGFDVDLFQEFFQGFVNHALVTLHIDNLRGHNTHHQIETVFKAFGRALRMAIEQDERMAGQMPSTKGCL.

Belongs to the imidazoleglycerol-phosphate dehydratase family.

The protein resides in the cytoplasm. The enzyme catalyses D-erythro-1-(imidazol-4-yl)glycerol 3-phosphate = 3-(imidazol-4-yl)-2-oxopropyl phosphate + H2O. Its pathway is amino-acid biosynthesis; L-histidine biosynthesis; L-histidine from 5-phospho-alpha-D-ribose 1-diphosphate: step 6/9. The protein is Imidazoleglycerol-phosphate dehydratase of Pseudomonas entomophila (strain L48).